A 425-amino-acid chain; its full sequence is Serine--tRNA ligase (425 aa).

230-232 is an L-serine binding site; it reads TAE. 261–263 serves as a coordination point for ATP; it reads RSE. E284 provides a ligand contact to L-serine. 348-351 serves as a coordination point for ATP; that stretch reads EISS. S384 lines the L-serine pocket.

This sequence belongs to the class-II aminoacyl-tRNA synthetase family. Type-1 seryl-tRNA synthetase subfamily. Homodimer. The tRNA molecule binds across the dimer.

The protein localises to the cytoplasm. It catalyses the reaction tRNA(Ser) + L-serine + ATP = L-seryl-tRNA(Ser) + AMP + diphosphate + H(+). The catalysed reaction is tRNA(Sec) + L-serine + ATP = L-seryl-tRNA(Sec) + AMP + diphosphate + H(+). Its pathway is aminoacyl-tRNA biosynthesis; selenocysteinyl-tRNA(Sec) biosynthesis; L-seryl-tRNA(Sec) from L-serine and tRNA(Sec): step 1/1. Its function is as follows. Catalyzes the attachment of serine to tRNA(Ser). Is also able to aminoacylate tRNA(Sec) with serine, to form the misacylated tRNA L-seryl-tRNA(Sec), which will be further converted into selenocysteinyl-tRNA(Sec). The protein is Serine--tRNA ligase of Maridesulfovibrio salexigens (strain ATCC 14822 / DSM 2638 / NCIMB 8403 / VKM B-1763) (Desulfovibrio salexigens).